Consider the following 694-residue polypeptide: uncharacterized protein (694 aa).

A Resolvase/invertase-type recombinase catalytic domain is found at 17 to 168; it reads DAFLYVRQSS…GGILNKARRG (152 aa). Ser-25 functions as the O-(5'-phospho-DNA)-serine intermediate in the catalytic mechanism. The segment at residues 175–316 is a DNA-binding region (recombinase); sequence PIGLVYTPDA…QAALEQNATG (142 aa). The helical transmembrane segment at 386-406 threads the bilayer; it reads AVSALLLEVMAPAAIDVALAV.

It is found in the membrane. This is an uncharacterized protein from Sinorhizobium fredii (strain NBRC 101917 / NGR234).